A 757-amino-acid polypeptide reads, in one-letter code: RNA-directed RNA polymerase catalytic subunit (757 aa).

The disordered stretch occupies residues 52 to 82; it reads RGKWTTNTETGAPQLNPIDGPLPEDNEPSGY. Residues 55–64 are compositionally biased toward polar residues; it reads WTTNTETGAP. 2 short sequence motifs (nuclear localization signal) span residues 187–195 and 203–216; these read RKRRVRDNM and RTIGKKKQRLNKRS. The promoter-binding site stretch occupies residues 249 to 256; the sequence is RGFVYFVE. The region spanning 286-483 is the RdRp catalytic domain; that stretch reads VRKMMTNSQD…GINMSKKKSY (198 aa).

This sequence belongs to the influenza viruses polymerase PB1 family. In terms of assembly, influenza RNA polymerase is composed of three subunits: PB1, PB2 and PA. Interacts (via N-terminus) with PA (via C-terminus). Interacts (via C-terminus) with PB2 (via N-terminus); this interaction is essential for transcription initiation. In terms of processing, phosphorylated by host PRKCA.

It localises to the host nucleus. The protein resides in the host cytoplasm. It carries out the reaction RNA(n) + a ribonucleoside 5'-triphosphate = RNA(n+1) + diphosphate. Functionally, RNA-dependent RNA polymerase which is responsible for replication and transcription of virus RNA segments. The transcription of viral mRNAs occurs by a unique mechanism called cap-snatching. 5' methylated caps of cellular mRNAs are cleaved after 10-13 nucleotides by PA. In turn, these short capped RNAs are used as primers by PB1 for transcription of viral mRNAs. During virus replication, PB1 initiates RNA synthesis and copy vRNA into complementary RNA (cRNA) which in turn serves as a template for the production of more vRNAs. This chain is RNA-directed RNA polymerase catalytic subunit, found in Aves.